The chain runs to 389 residues: Chalcone synthase H2 (389 aa).

The active site involves C164.

Belongs to the thiolase-like superfamily. Chalcone/stilbene synthases family.

The protein localises to the cytoplasm. The catalysed reaction is (E)-4-coumaroyl-CoA + 3 malonyl-CoA + 3 H(+) = 2',4,4',6'-tetrahydroxychalcone + 3 CO2 + 4 CoA. The protein operates within secondary metabolite biosynthesis; flavonoid biosynthesis. In terms of biological role, involved in the biosynthesis of prenylated phenolics natural products which contribute to the bitter taste of beer and display broad biological activities. Chalcone synthase that can use 4-coumaroyl-CoA to produce 4,2',4',6'-tetrahydroxychalcone (also termed naringenin-chalcone or chalcone) which can, under specific conditions, spontaneously isomerize into naringenin. In Humulus lupulus (European hop), this protein is Chalcone synthase H2.